Consider the following 371-residue polypeptide: RT1 class I histocompatibility antigen, AA alpha chain (371 aa).

The N-terminal stretch at 1–24 (MEAMAPRTLLLLLAAALAPTQTRA) is a signal peptide. Residues 25-114 (GSHSLRYFYT…LRGYYNQSEG (90 aa)) form an alpha-1 region. Residues 25-311 (GSHSLRYFYT…PSTDSNMETT (287 aa)) are Extracellular-facing. N-linked (GlcNAc...) asparagine glycosylation occurs at asparagine 110. Residues 115-206 (GSHTIQEMYG…ELGKETLLRS (92 aa)) are alpha-2. An alpha-3 region spans residues 207-298 (DPPEAHVTLH…GLPKPLSQRW (92 aa)). An Ig-like C1-type domain is found at 209 to 295 (PEAHVTLHPR…EHEGLPKPLS (87 aa)). A glycan (N-linked (GlcNAc...) asparagine) is linked at asparagine 280. The segment at 299-311 (EPSPSTDSNMETT) is connecting peptide. The chain crosses the membrane as a helical span at residues 312–336 (VIYVILGAVAMIGAVAIIGAMVAVV). At 337–371 (RRRKRNTGGKGGDYAPAPGRDSSQSSDVSLPDCKA) the chain is on the cytoplasmic side. The disordered stretch occupies residues 342 to 371 (NTGGKGGDYAPAPGRDSSQSSDVSLPDCKA). 2 positions are modified to phosphoserine: serine 362 and serine 365.

The protein belongs to the MHC class I family. Heterodimer of an alpha chain and a beta chain (beta-2-microglobulin).

The protein resides in the membrane. Its function is as follows. Involved in the presentation of foreign antigens to the immune system. The chain is RT1 class I histocompatibility antigen, AA alpha chain from Rattus norvegicus (Rat).